A 77-amino-acid chain; its full sequence is NADH-ubiquinone oxidoreductase chain 4L (77 aa).

A run of 2 helical transmembrane segments spans residues 15–37 and 44–64; these read WQRL…LKFS and MFFY…VVMV.

Belongs to the complex I subunit 4L family.

It localises to the mitochondrion membrane. The enzyme catalyses a ubiquinone + NADH + 5 H(+)(in) = a ubiquinol + NAD(+) + 4 H(+)(out). Functionally, core subunit of the mitochondrial membrane respiratory chain NADH dehydrogenase (Complex I) that is believed to belong to the minimal assembly required for catalysis. Complex I functions in the transfer of electrons from NADH to the respiratory chain. The immediate electron acceptor for the enzyme is believed to be ubiquinone. The protein is NADH-ubiquinone oxidoreductase chain 4L of Caenorhabditis elegans.